The primary structure comprises 161 residues: 18.1 kDa class I heat shock protein (161 aa).

One can recognise a sHSP domain in the interval Asp45 to Ala160.

This sequence belongs to the small heat shock protein (HSP20) family. As to quaternary structure, may form oligomeric structures. Binds to AKR2A.

It localises to the cytoplasm. The protein is 18.1 kDa class I heat shock protein (HSP18.1) of Arabidopsis thaliana (Mouse-ear cress).